We begin with the raw amino-acid sequence, 162 residues long: RNA pyrophosphohydrolase (162 aa).

Residues 11–155 form the Nudix hydrolase domain; the sequence is PYRPCVGIVL…KRAVYEEVVA (145 aa). Positions 45-66 match the Nudix box motif; the sequence is GGIDEGEKPREAALRELWEETG.

Belongs to the Nudix hydrolase family. RppH subfamily. Requires a divalent metal cation as cofactor.

Functionally, accelerates the degradation of transcripts by removing pyrophosphate from the 5'-end of triphosphorylated RNA, leading to a more labile monophosphorylated state that can stimulate subsequent ribonuclease cleavage. The chain is RNA pyrophosphohydrolase from Cereibacter sphaeroides (strain ATCC 17029 / ATH 2.4.9) (Rhodobacter sphaeroides).